We begin with the raw amino-acid sequence, 715 residues long: Protein MTSS 2 (715 aa).

The IMD domain occupies 1-249 (METAEKECGA…EQVIKDLKGS (249 aa)). The stretch at 134–156 (HEIKKKSSDTLKLQKKARKGKGD) forms a coiled coil. Low complexity-rich tracts occupy residues 253 to 274 (WSYQTPPSSPSSSNSRKSSMCS), 284 to 295 (SSVSSHDSGFVS), and 312 to 330 (TSQKSSSSASSEASETCQS). 3 disordered regions span residues 253 to 405 (WSYQ…EVSP), 420 to 485 (LEHQ…RNSN), and 527 to 562 (IRRTPSTKPTVRRALSSAGPIPIRPPIVPVKTPTVP). Thr257 carries the phosphothreonine modification. The residue at position 261 (Ser261) is a Phosphoserine. The segment covering 331–341 (VSECSSPTSDW) has biased composition (polar residues). The span at 360–369 (DRVEHLRDTE) shows a compositional bias: basic and acidic residues. Ser404 is modified (phosphoserine). Over residues 429 to 442 (SLQYSSGYSTQTTT) the composition is skewed to low complexity. Residues 443–455 (PSCSEDTIPSQGS) show a composition bias toward polar residues. 6 positions are modified to phosphoserine: Ser542, Ser564, Ser575, Ser587, Ser597, and Ser602. Residue Thr606 is modified to Phosphothreonine. The interval 661 to 690 (FPFPTALSATPSEETPTPPPAATSDPPAED) is disordered. In terms of domain architecture, WH2 spans 687–704 (PAEDMLVAIRRGVRLRRT).

Belongs to the MTSS family. In terms of assembly, interacts (via IMD domain) with RAC1; this interaction may be important to potentiate PDGF-induced RAC1 activation.

The protein localises to the cytoplasm. Its subcellular location is the cell projection. The protein resides in the ruffle. In terms of biological role, involved in plasma membrane dynamics. Potentiated PDGF-mediated formation of membrane ruffles and lamellipodia in fibroblasts, acting via RAC1 activation. May function in actin bundling. The protein is Protein MTSS 2 (Mtss2) of Mus musculus (Mouse).